The chain runs to 551 residues: Endolytic murein transglycosylase (551 aa).

Over 1 to 187 (MSEKSREEEK…PKKEKKSHVK (187 aa)) the chain is Cytoplasmic. Positions 38–180 (VRTPANEPSA…EGAKPAKPKK (143 aa)) are disordered. 2 stretches are compositionally biased toward low complexity: residues 100–110 (PSSPAEESGSR) and 145–157 (QAGP…ATET). Residues 159-174 (DIIRDTSRRSRREGAK) are compositionally biased toward basic and acidic residues. A helical transmembrane segment spans residues 188–208 (AFVISFLVFLALLSAGGYFGY). Over 209–551 (QYVLDSLLPI…VAEHVNSKLN (343 aa)) the chain is Extracellular.

The protein belongs to the transglycosylase MltG family.

Its subcellular location is the cell membrane. The enzyme catalyses a peptidoglycan chain = a peptidoglycan chain with N-acetyl-1,6-anhydromuramyl-[peptide] at the reducing end + a peptidoglycan chain with N-acetylglucosamine at the non-reducing end.. In terms of biological role, functions as a peptidoglycan terminase that cleaves nascent peptidoglycan strands endolytically to terminate their elongation. Involved in peripheral peptidoglycan (PG) synthesis. The polypeptide is Endolytic murein transglycosylase (Streptococcus pneumoniae serotype 2 (strain D39 / NCTC 7466)).